Consider the following 300-residue polypeptide: Serine/arginine-rich splicing factor SR34A (300 aa).

In terms of domain architecture, RRM 1 spans 7–82 (RSIYVGNLPG…CRLRVELAHG (76 aa)). 2 disordered regions span residues 81 to 110 (HGGRGQSSSDRRGGYGGGGSGYGGGGGGGG) and 198 to 300 (YESS…EGSV). The segment covering 94–110 (GYGGGGSGYGGGGGGGG) has biased composition (gly residues). Residues 122–200 (FRVIVRGLPS…GFIRVKKYES (79 aa)) form the RRM 2 domain. Residues 203–239 (SRSRSPSRSRSRSRSRSRSRGRGRSHSRSRSLSRSKS) are compositionally biased toward basic residues. 8 positions are modified to phosphoserine: S207, S209, S231, S233, S239, S259, S275, and S285. Residues 253-262 (SRSISKSRSP) are compositionally biased toward low complexity. Residues 275-287 (SRSKSRSRSRSRS) are compositionally biased toward basic residues.

The protein belongs to the splicing factor SR family. SR subfamily. As to quaternary structure, component of the spliceosome.

Its subcellular location is the nucleus speckle. The protein resides in the nucleus. The protein localises to the nucleoplasm. Its function is as follows. Probably involved in intron recognition and spliceosome assembly. This is Serine/arginine-rich splicing factor SR34A (SR34A) from Arabidopsis thaliana (Mouse-ear cress).